Reading from the N-terminus, the 310-residue chain is Ribosomal RNA small subunit methyltransferase H (310 aa).

Residues 33–35 (AGH), aspartate 53, phenylalanine 79, aspartate 100, and glutamine 107 each bind S-adenosyl-L-methionine.

The protein belongs to the methyltransferase superfamily. RsmH family.

The protein localises to the cytoplasm. The enzyme catalyses cytidine(1402) in 16S rRNA + S-adenosyl-L-methionine = N(4)-methylcytidine(1402) in 16S rRNA + S-adenosyl-L-homocysteine + H(+). Its function is as follows. Specifically methylates the N4 position of cytidine in position 1402 (C1402) of 16S rRNA. This chain is Ribosomal RNA small subunit methyltransferase H, found in Clostridium beijerinckii (strain ATCC 51743 / NCIMB 8052) (Clostridium acetobutylicum).